We begin with the raw amino-acid sequence, 114 residues long: T cell receptor beta variable 5-5 (114 aa).

A signal peptide spans 1–21; that stretch reads MGPGLLCWVLLCLLGAGPVDA. The region spanning 22–114 is the Ig-like domain; it reads GVTQSPTHLI…SALYLCASSL (93 aa). An intrachain disulfide couples C42 to C110. N90 carries N-linked (GlcNAc...) asparagine glycosylation.

Alpha-beta TR is a heterodimer composed of an alpha and beta chain; disulfide-linked. The alpha-beta TR is associated with the transmembrane signaling CD3 coreceptor proteins to form the TR-CD3 (TcR or TCR). The assembly of alpha-beta TR heterodimers with CD3 occurs in the endoplasmic reticulum where a single alpha-beta TR heterodimer associates with one CD3D-CD3E heterodimer, one CD3G-CD3E heterodimer and one CD247 homodimer forming a stable octameric structure. CD3D-CD3E and CD3G-CD3E heterodimers preferentially associate with TR alpha and TR beta chains, respectively. The association of the CD247 homodimer is the last step of TcR assembly in the endoplasmic reticulum and is required for transport to the cell surface.

It localises to the cell membrane. Functionally, v region of the variable domain of T cell receptor (TR) beta chain that participates in the antigen recognition. Alpha-beta T cell receptors are antigen specific receptors which are essential to the immune response and are present on the cell surface of T lymphocytes. Recognize peptide-major histocompatibility (MH) (pMH) complexes that are displayed by antigen presenting cells (APC), a prerequisite for efficient T cell adaptive immunity against pathogens. Binding of alpha-beta TR to pMH complex initiates TR-CD3 clustering on the cell surface and intracellular activation of LCK that phosphorylates the ITAM motifs of CD3G, CD3D, CD3E and CD247 enabling the recruitment of ZAP70. In turn ZAP70 phosphorylates LAT, which recruits numerous signaling molecules to form the LAT signalosome. The LAT signalosome propagates signal branching to three major signaling pathways, the calcium, the mitogen-activated protein kinase (MAPK) kinase and the nuclear factor NF-kappa-B (NF-kB) pathways, leading to the mobilization of transcription factors that are critical for gene expression and essential for T cell growth and differentiation. The T cell repertoire is generated in the thymus, by V-(D)-J rearrangement. This repertoire is then shaped by intrathymic selection events to generate a peripheral T cell pool of self-MH restricted, non-autoaggressive T cells. Post-thymic interaction of alpha-beta TR with the pMH complexes shapes TR structural and functional avidity. The sequence is that of T cell receptor beta variable 5-5 from Homo sapiens (Human).